We begin with the raw amino-acid sequence, 367 residues long: MINSNDRQSTLVVAMSGGVDSSVVAGILCEQGYNVIGITLQLYDHGMATAKKNACCAGQDIYDAKMVANKLGMPHYVLDYESKFKESVIDNFVDSYLRGETPLPCVQCNKSVKFRDLIKTAKELGADKLVTGHYVRKINGDNGPELHMGLDPLKDQSYFLFATTKEQLEYLDFPLGALTKDETRKLASKFGLEVADKPDSQDICFVPDGNYKNVINKIRPNASESGKILHINGFELGTHSGIINYTIGQRRGLGISYHEPLYVIKIDPNSNIVYVGPESALNVQEFVIKDVNWLAGSLKDGEKLEVSVKVRSTRPPRLAEISKLEGDRMKVKFLSEEKAVAPGQACVIYDGTRVLGGGWITRDVIPA.

Residues 14-21 (AMSGGVDS) and L40 contribute to the ATP site. The Nucleophile role is filled by C108. C108 and C204 are disulfide-bonded. G132 serves as a coordination point for ATP. The interval 154 to 156 (KDQ) is interaction with tRNA. Catalysis depends on C204, which acts as the Cysteine persulfide intermediate.

This sequence belongs to the MnmA/TRMU family.

It is found in the cytoplasm. The enzyme catalyses S-sulfanyl-L-cysteinyl-[protein] + uridine(34) in tRNA + AH2 + ATP = 2-thiouridine(34) in tRNA + L-cysteinyl-[protein] + A + AMP + diphosphate + H(+). Its function is as follows. Catalyzes the 2-thiolation of uridine at the wobble position (U34) of tRNA, leading to the formation of s(2)U34. The chain is tRNA-specific 2-thiouridylase MnmA from Rickettsia bellii (strain OSU 85-389).